The chain runs to 1912 residues: Receptor-type tyrosine-protein phosphatase delta (1912 aa).

The signal sequence occupies residues 1–20 (MVPVARPLSLLLTFFLCACA). Over 21–1266 (ETPPRFTRTP…PQPITDEEEG (1246 aa)) the chain is Extracellular. Ig-like C2-type domains lie at 24 to 114 (PRFT…TRLT) and 126 to 224 (PTID…ANLY). Cystine bridges form between cysteine 45–cysteine 98 and cysteine 147–cysteine 207. Residues 181-189 (ESIGGTPIR) form a mini-exon peptide A9; sufficient for interaction with IL1RAPL1 region. A mini-exon peptide B; required for interaction with SLITRK2 and in the function in pre-synaptic differentiation; Acts as an adjustable linker to control relative positions and orientations of the PTPRD second and third immunoglobilin domains for their simultaneous interactions with the first immunoglobilin domain of IL1RAPL1 and IL1RAP; Modulates affinity for IL1RAPL1 and IL1RAP region spans residues 227-230 (ELRE). An Ig-like C2-type 3 domain is found at 236–318 (PRFSIPPTNH…GVIEAIAQIT (83 aa)). Asparagine 254 and asparagine 299 each carry an N-linked (GlcNAc...) asparagine glycan. An intrachain disulfide couples cysteine 257 to cysteine 302. Fibronectin type-III domains lie at 325–415 (PPGT…TSEQ), 420–516 (APRD…TGVP), 518–607 (QPLN…TMQS), 612–709 (PPQD…TDED), 714–822 (PPRK…TTGA), 823–916 (VPGK…VPEE), 921–1016 (FPQN…TLPV), and 1020–1106 (FAKN…TAPD). Asparagine 724 and asparagine 832 each carry an N-linked (GlcNAc...) asparagine glycan. A helical transmembrane segment spans residues 1267-1287 (LIWVVGPVLAVVFIICIVIAI). At 1288 to 1912 (LLYKRKRAES…YLGSFDHYAT (625 aa)) the chain is on the cytoplasmic side. The interval 1298 to 1319 (ESRKSSLPNSKEVPSHHPTDPV) is disordered. Basic and acidic residues predominate over residues 1310-1319 (VPSHHPTDPV). 2 Tyrosine-protein phosphatase domains span residues 1357–1612 (FSQE…LLEA) and 1644–1903 (MELE…ALEY). Substrate is bound by residues aspartate 1521, 1553–1559 (CSAGVGR), and glutamine 1597. The Phosphocysteine intermediate role is filled by cysteine 1553. The Phosphocysteine intermediate role is filled by cysteine 1844.

This sequence belongs to the protein-tyrosine phosphatase family. Receptor class 2A subfamily. In terms of assembly, interacts with PPFIA1, PPFIA2 and PPFIA3. Interacts (via extracellular domain) with SLITRK4 (via LRR 1 and 2 repeats). Interacts with SLITRK2; induces presynaptic differentiation. Interacts (via the second immunoglobilin domain) with IL1RAPL1 (via the first immunoglobilin domain); induces pre- and postsynaptic differentiation of neurons and synapse formation. Isoform G, isoform H, isoform I, isoform J, and isoform K do not interact with IL1RAPL1. Interacts (via the third immunoglobilin domain) with IL1RAP (via the first immunoglobilin domain); induces pre- and postsynaptic differentiation of neurons. In terms of processing, a cleavage occurs, separating the extracellular domain from the transmembrane segment. This process called 'ectodomain shedding' is thought to be involved in receptor desensitization, signal transduction and/or membrane localization. In terms of tissue distribution, brain, kidney, heart, and some B-cell lines.

The protein resides in the membrane. It catalyses the reaction O-phospho-L-tyrosyl-[protein] + H2O = L-tyrosyl-[protein] + phosphate. Its function is as follows. Can bidirectionally induce pre- and post-synaptic differentiation of neurons by mediating interaction with IL1RAP and IL1RAPL1 trans-synaptically. Involved in pre-synaptic differentiation through interaction with SLITRK2. The protein is Receptor-type tyrosine-protein phosphatase delta (Ptprd) of Mus musculus (Mouse).